A 340-amino-acid polypeptide reads, in one-letter code: Flap endonuclease 1 (340 aa).

Residues 1–98 form an N-domain region; the sequence is MGLNLKDLVV…AEIERRKQIK (98 aa). Residues aspartate 27, aspartate 80, glutamate 152, glutamate 154, aspartate 173, aspartate 175, and aspartate 236 each coordinate Mg(2+). An I-domain region spans residues 116–258; it reads DARKYAQQTT…TALKMIKQHS (143 aa).

This sequence belongs to the XPG/RAD2 endonuclease family. FEN1 subfamily. As to quaternary structure, interacts with PCNA. PCNA stimulates the nuclease activity without altering cleavage specificity. Mg(2+) serves as cofactor.

In terms of biological role, structure-specific nuclease with 5'-flap endonuclease and 5'-3' exonuclease activities involved in DNA replication and repair. During DNA replication, cleaves the 5'-overhanging flap structure that is generated by displacement synthesis when DNA polymerase encounters the 5'-end of a downstream Okazaki fragment. Binds the unpaired 3'-DNA end and kinks the DNA to facilitate 5' cleavage specificity. Cleaves one nucleotide into the double-stranded DNA from the junction in flap DNA, leaving a nick for ligation. Also involved in the base excision repair (BER) pathway. Acts as a genome stabilization factor that prevents flaps from equilibrating into structures that lead to duplications and deletions. Also possesses 5'-3' exonuclease activity on nicked or gapped double-stranded DNA. The polypeptide is Flap endonuclease 1 (Nitrosopumilus maritimus (strain SCM1)).